A 372-amino-acid chain; its full sequence is Galanin receptor type 2 (372 aa).

Residues 1–28 (MNGSGSQGAENTSQEGGSGGWQPEAVLV) are Extracellular-facing. Asparagine 2 and asparagine 11 each carry an N-linked (GlcNAc...) asparagine glycan. A helical transmembrane segment spans residues 29 to 49 (PLFFALIFLVGTVGNALVLAV). Over 50 to 60 (LLRGGQAVSTT) the chain is Cytoplasmic. The chain crosses the membrane as a helical span at residues 61 to 81 (NLFILNLGVADLCFILCCVPF). Residues 82 to 99 (QATIYTLDDWVFGSLLCK) lie on the Extracellular side of the membrane. Cysteine 98 and cysteine 175 are oxidised to a cystine. A helical transmembrane segment spans residues 100 to 121 (AVHFLIFLTMHASSFTLAAVSL). At 122–141 (DRYLAIRYPLHSRELRTPRN) the chain is on the cytoplasmic side. Residues 142–162 (ALAAIGLIWGLALLFSGPYLS) traverse the membrane as a helical segment. Topologically, residues 163-187 (YYRQSQLANLTVCHPAWSAPRRRAM) are extracellular. A helical membrane pass occupies residues 188–208 (DLCTFVFSYLLPVLVLSLTYA). The Cytoplasmic segment spans residues 209-237 (RTLRYLWRTVDPVTAGSGSQRAKRKVTRM). The helical transmembrane segment at 238–258 (IIIVAVLFCLCWMPHHALILC) threads the bilayer. Topologically, residues 259–260 (VW) are extracellular. A helical membrane pass occupies residues 261 to 281 (FGRFPLTRATYALRILSHLVS). The Cytoplasmic segment spans residues 282–372 (YANSCVNPIV…ASSRTLDPAC (91 aa)). The interval 353 to 372 (VPPPALPNCTASSRTLDPAC) is disordered. Residues 361 to 372 (CTASSRTLDPAC) show a composition bias toward polar residues.

This sequence belongs to the G-protein coupled receptor 1 family.

The protein resides in the cell membrane. Functionally, receptor for the hormone galanin, GALP and spexin-1. The activity of this receptor is mediated by G proteins that activate the phospholipase C/protein kinase C pathway (via G(q)) and that inhibit adenylyl cyclase (via G(i)). This is Galanin receptor type 2 (Galr2) from Rattus norvegicus (Rat).